The primary structure comprises 418 residues: Gamma-glutamyl phosphate reductase (418 aa).

Belongs to the gamma-glutamyl phosphate reductase family.

The protein localises to the cytoplasm. The enzyme catalyses L-glutamate 5-semialdehyde + phosphate + NADP(+) = L-glutamyl 5-phosphate + NADPH + H(+). It participates in amino-acid biosynthesis; L-proline biosynthesis; L-glutamate 5-semialdehyde from L-glutamate: step 2/2. Functionally, catalyzes the NADPH-dependent reduction of L-glutamate 5-phosphate into L-glutamate 5-semialdehyde and phosphate. The product spontaneously undergoes cyclization to form 1-pyrroline-5-carboxylate. The chain is Gamma-glutamyl phosphate reductase from Clostridium acetobutylicum (strain ATCC 824 / DSM 792 / JCM 1419 / IAM 19013 / LMG 5710 / NBRC 13948 / NRRL B-527 / VKM B-1787 / 2291 / W).